We begin with the raw amino-acid sequence, 513 residues long: uncharacterized protein (513 aa).

It belongs to the NodU/CmcH family.

This is an uncharacterized protein from Methanocaldococcus jannaschii (strain ATCC 43067 / DSM 2661 / JAL-1 / JCM 10045 / NBRC 100440) (Methanococcus jannaschii).